A 310-amino-acid polypeptide reads, in one-letter code: uncharacterized protein (310 aa).

His-239 is an active-site residue.

This sequence belongs to the IUNH family.

Its subcellular location is the cytoplasm. It is found in the nucleus. This is an uncharacterized protein from Schizosaccharomyces pombe (strain 972 / ATCC 24843) (Fission yeast).